The primary structure comprises 193 residues: Ion-translocating oxidoreductase complex subunit A (193 aa).

The next 6 helical transmembrane spans lie at 5–25 (LLLL…FLGL), 39–59 (VGMG…AYLV), 72–92 (LSTL…EMVI), 102–122 (ILGI…LALL), 134–154 (VVYG…FASL), and 170–190 (IAIG…FTGL).

Belongs to the NqrDE/RnfAE family. As to quaternary structure, the complex is composed of six subunits: RnfA, RnfB, RnfC, RnfD, RnfE and RnfG.

The protein localises to the cell inner membrane. Part of a membrane-bound complex that couples electron transfer with translocation of ions across the membrane. The protein is Ion-translocating oxidoreductase complex subunit A of Tolumonas auensis (strain DSM 9187 / NBRC 110442 / TA 4).